The sequence spans 253 residues: Light-harvesting complex stress-related protein 1, chloroplastic (253 aa).

A chloroplast-targeting transit peptide spans 1 to 39 (MAMMMRKAAAVPASSRRSVAVNSVSGKRTVSGKAGAPVP). A chlorophyll b-binding site is contributed by Y45. The chlorophyll a site is built by F60, E81, and H84. Chlorophyll b is bound at residue R86. The helical transmembrane segment at 87-107 (VAMLAALGFIVGEQLQDFPLF) threads the bilayer. Chlorophyll a is bound at residue Q124. A helical membrane pass occupies residues 131-151 (EPLLIAIGVAESYRVAVGWAT). The chlorophyll b site is built by E141 and R144. K190, E191, N194, R196, and Q208 together coordinate chlorophyll a. The chain crosses the membrane as a helical span at residues 197–217 (LAMIAIAAFVAQELVEQTEIF).

This sequence belongs to the light-harvesting chlorophyll a/b-binding (LHC) protein family.

The protein localises to the plastid. Its subcellular location is the chloroplast thylakoid membrane. Its function is as follows. Required for non-photochemical quenching (NPQ), a mechanism that converts and dissipates the harmful excess absorbed light energy into heat and protect the photosynthetic apparatus from photo-oxidative damage. Is able to sense luminal acidification of the thylakoid membranes, which occurs along with elevated electron flow caused by excess light, and to induce a large, fast, and reversible pH-dependent quenching in LHCII-containing membranes. Mediates excitation energy transfer from light-harvesting complex II (LHCII) to photosystem I (PSI), rather than photosystem II (PSII), at low pH, which mimics the acidified lumen of the thylakoid membranes in high light-exposed chloroplasts. Activates PSI-dependent fluorescence quenching in addition to dissipating excitation energy in LHCII to avoid photooxidative stress under excess light. This Chlamydomonas reinhardtii (Chlamydomonas smithii) protein is Light-harvesting complex stress-related protein 1, chloroplastic.